The sequence spans 153 residues: MAL-like protein (153 aa).

4 helical membrane passes run 22–42 (LFLTIPFAFFLPELIFGFLVW), 59–79 (VMYVSLTSFLISLMFLLSYLF), 97–117 (GTTGILYMSAAVLQVHATIVS), and 131–151 (AASFFAFIATLLYILHAFSIY). Residues 22-153 (LFLTIPFAFF…ILHAFSIYYH (132 aa)) enclose the MARVEL domain.

This sequence belongs to the MAL family.

It localises to the membrane. The sequence is that of MAL-like protein (MALL) from Homo sapiens (Human).